A 393-amino-acid polypeptide reads, in one-letter code: S-adenosylmethionine synthase 2 (393 aa).

Position 9 (E9) interacts with Mg(2+). An ATP-binding site is contributed by H15. Position 43 (E43) interacts with K(+). L-methionine-binding residues include E56 and Q99. ATP-binding positions include 167 to 169 (DGK), 235 to 238 (SGRF), D246, 252 to 253 (RK), A269, K273, and K277. Residue D246 participates in L-methionine binding. L-methionine is bound at residue K277.

It belongs to the AdoMet synthase family. As to quaternary structure, homotetramer. It depends on Mn(2+) as a cofactor. Mg(2+) is required as a cofactor. Co(2+) serves as cofactor. Requires K(+) as cofactor.

It localises to the cytoplasm. The enzyme catalyses L-methionine + ATP + H2O = S-adenosyl-L-methionine + phosphate + diphosphate. The protein operates within amino-acid biosynthesis; S-adenosyl-L-methionine biosynthesis; S-adenosyl-L-methionine from L-methionine: step 1/1. In terms of biological role, catalyzes the formation of S-adenosylmethionine from methionine and ATP. The reaction comprises two steps that are both catalyzed by the same enzyme: formation of S-adenosylmethionine (AdoMet) and triphosphate, and subsequent hydrolysis of the triphosphate. The chain is S-adenosylmethionine synthase 2 (METK2) from Populus trichocarpa (Western balsam poplar).